A 436-amino-acid chain; its full sequence is ATP-sensitive inward rectifier potassium channel 14 (436 aa).

Residues 1–83 (MGLARALRRL…LSDLFTTCVD (83 aa)) are Cytoplasmic-facing. Residues 14-43 (LDSGDSRAGDEEEAGPGLCRNGWAPAPVQS) are disordered. Cys-81 carries the post-translational modification S-nitrosocysteine. Residues 84-110 (VRWRWMCLLFSCSFLASWLLFGLAFWL) form a helical membrane-spanning segment. Over 111 to 133 (IASLHGDLAAPPPPAPCFSHVAS) the chain is Extracellular. The helical; Pore-forming intramembrane region spans 134-150 (FLAAFLFALETQTSIGY). A Selectivity filter motif is present at residues 147-152 (SIGYGV). Residues 151 to 159 (GVRSVTEEC) lie on the Extracellular side of the membrane. A helical membrane pass occupies residues 160–187 (PAAVAAVVLQCIAGCVLDAFVVGAVMAK). Residues 188-436 (MAKPKKRNET…TPTLALTLPP (249 aa)) are Cytoplasmic-facing. Positions 400–418 (QEEDEDDETEEGNGVETED) are enriched in acidic residues. Residues 400-436 (QEEDEDDETEEGNGVETEDGAASPRVLTPTLALTLPP) are disordered. Residues 426 to 436 (LTPTLALTLPP) are compositionally biased toward low complexity.

The protein belongs to the inward rectifier-type potassium channel (TC 1.A.2.1) family. KCNJ14 subfamily. Expressed preferentially in retina.

Its subcellular location is the membrane. It catalyses the reaction K(+)(in) = K(+)(out). Channel activity is regulated by variations of cytosolic pH; channels are activated by alkaline and inhibited by acidic pH values. Inhibited by Ba(2+) and Cs(+) in a voltage-dependent manner; sensitivity to those inhibitors is lower than in other Kir channels. In terms of biological role, inward rectifier potassium channels are characterized by a greater tendency to allow potassium to flow into the cell rather than out of it. Their voltage dependence is regulated by the concentration of extracellular potassium; as external potassium is raised, the voltage range of the channel opening shifts to more positive voltages. This chain is ATP-sensitive inward rectifier potassium channel 14 (KCNJ14), found in Homo sapiens (Human).